A 531-amino-acid chain; its full sequence is CTP synthase (531 aa).

Residues 1–267 form an amidoligase domain region; the sequence is MTKYIIITGG…ASKILSKLNL (267 aa). Ser-13 is a CTP binding site. Ser-13 contributes to the UTP binding site. ATP is bound at residue 14–19; the sequence is SVGKGT. Tyr-54 contributes to the L-glutamine binding site. An ATP-binding site is contributed by Asp-71. Asp-71 and Glu-141 together coordinate Mg(2+). CTP contacts are provided by residues 148–150, 188–193, and Lys-224; these read DIE and KTKPLQ. Residues 188–193 and Lys-224 each bind UTP; that span reads KTKPLQ. Positions 292-531 constitute a Glutamine amidotransferase type-1 domain; that stretch reads KIALVGKYTK…IGFLRAAAGV (240 aa). Gly-355 contacts L-glutamine. Catalysis depends on Cys-382, which acts as the Nucleophile; for glutamine hydrolysis. L-glutamine-binding positions include 383-386, Glu-406, and Arg-463; that span reads YGMQ. Residues His-507 and Glu-509 contribute to the active site.

It belongs to the CTP synthase family. Homotetramer.

The catalysed reaction is UTP + L-glutamine + ATP + H2O = CTP + L-glutamate + ADP + phosphate + 2 H(+). It catalyses the reaction L-glutamine + H2O = L-glutamate + NH4(+). It carries out the reaction UTP + NH4(+) + ATP = CTP + ADP + phosphate + 2 H(+). It participates in pyrimidine metabolism; CTP biosynthesis via de novo pathway; CTP from UDP: step 2/2. Its activity is regulated as follows. Allosterically activated by GTP, when glutamine is the substrate; GTP has no effect on the reaction when ammonia is the substrate. The allosteric effector GTP functions by stabilizing the protein conformation that binds the tetrahedral intermediate(s) formed during glutamine hydrolysis. Inhibited by the product CTP, via allosteric rather than competitive inhibition. Its function is as follows. Catalyzes the ATP-dependent amination of UTP to CTP with either L-glutamine or ammonia as the source of nitrogen. Regulates intracellular CTP levels through interactions with the four ribonucleotide triphosphates. The polypeptide is CTP synthase (Sulfurisphaera tokodaii (strain DSM 16993 / JCM 10545 / NBRC 100140 / 7) (Sulfolobus tokodaii)).